Consider the following 1722-residue polypeptide: Signal-induced proliferation-associated 1-like protein 2 (1722 aa).

2 disordered regions span residues 1–29 (MSDP…RTMQ) and 44–72 (SMGP…TPAV). Positions 57-66 (EGGGGGGGPA) are enriched in gly residues. 3 positions are modified to phosphoserine: S149, S380, and S384. The segment at 362–405 (ASAASQTPVPVGPAGGCESPLGSKEDLNSKENPDADEGDGKSND) is disordered. Over residues 384 to 403 (SKEDLNSKENPDADEGDGKS) the composition is skewed to basic and acidic residues. The region spanning 596-813 (LLKLDEQGLS…RTRQEYLKDL (218 aa)) is the Rap-GAP domain. Positions 951-1027 (EMTLRRNGLG…VKVVIIQPHE (77 aa)) constitute a PDZ domain. S1030 carries the post-translational modification Phosphoserine. Disordered regions lie at residues 1068–1246 (HRVP…FGSG) and 1331–1360 (GSMG…SKST). Composition is skewed to low complexity over residues 1091 to 1103 (LQCQ…AQAA) and 1120 to 1131 (SSPSNQSSSSDP). Residues 1195-1218 (YKERVLQKDGSCKESPNKLSHIGD) show a composition bias toward basic and acidic residues. The segment covering 1220–1237 (SCSSHSSSNTLSSNTSSN) has biased composition (low complexity). A Phosphoserine modification is found at S1245. Positions 1331 to 1355 (GSMGDLSEVSSHSSGSQHSGSPSAH) are enriched in low complexity. A phosphoserine mark is found at S1461, S1472, S1478, S1488, S1549, S1552, and S1591. A coiled-coil region spans residues 1652 to 1712 (STLTGKVNQL…ATAQLRKFTE (61 aa)).

This Mus musculus (Mouse) protein is Signal-induced proliferation-associated 1-like protein 2 (Sipa1l2).